A 205-amino-acid chain; its full sequence is Macrophage immunometabolism regulator (205 aa).

The tract at residues 1–40 (MEVDINGVNRTNNSVPSTTEGSSPSKPDPEKPRCSSTPCS) is disordered. Polar residues predominate over residues 8-25 (VNRTNNSVPSTTEGSSPS).

The protein belongs to the UNC119-binding protein family. Interacts with unc119 family proteins; interaction preferentially takes place when unc119 proteins are unliganded with myristoylated proteins.

The protein localises to the cytoplasm. It localises to the cell projection. It is found in the cilium. Functionally, may play a role in immune regulation through regulation of the macrophage function. May also play a role in trafficking of proteins via its interaction with unc119 family cargo adapters. May play a role in ciliary membrane localization. The polypeptide is Macrophage immunometabolism regulator (macir) (Xenopus tropicalis (Western clawed frog)).